Consider the following 225-residue polypeptide: Ras-related protein Rab-21 (225 aa).

N-acetylalanine is present on A2. Residues G28, G31, K32, T33, S34, N45, D46, H48, T50, and T51 each contribute to the GTP site. Residue T33 coordinates Mg(2+). A Switch 1 motif is present at residues 43 to 56; it reads KFNDKHITTLQASF. Residues T51 and D74 each contribute to the Mg(2+) site. A Switch 2 motif is present at residues 76-94; it reads AGQERFHALGPIYYRDSNG. G77, N132, K133, D135, A163, and K164 together coordinate GTP. The disordered stretch occupies residues 188 to 225; the sequence is ERAKGNGSSQPGTARRGVQIIDDEPQAQTSGGGCCSSG. 2 S-geranylgeranyl cysteine lipidation sites follow: C221 and C222. Position 222 is a cysteine methyl ester (C222). The propeptide at 223 to 225 is removed in mature form; sequence SSG.

This sequence belongs to the small GTPase superfamily. Rab family. Interacts with the cytoplasmic tail of integrins ITGA1, ITGA2, ITGA5, ITGA6, ITGA11 and ITGB1. Interacts with RABGEF1 (via VPS9 domain). Interacts with ANKRD27. Interacts with VAMP7. Interacts (in GTP-bound form) with VAMP8 in response to starvation; the interaction probably regulates VAMP8 endolysosomal trafficking. Interacts (active GTP-bound form) with TMED10; the interaction is indirect and regulates TMED10 abundance and localization at the Golgi. The cofactor is Mg(2+). In terms of tissue distribution, widely expressed. In jejunal tissue, predominantly expressed in the apical region of the epithelial cell layer of the villi, weak expression, if any, in the crypt epithelium. Capillary endothelium and some cell types in the lamina propria also show expression.

It localises to the endoplasmic reticulum membrane. It is found in the golgi apparatus. The protein localises to the trans-Golgi network. Its subcellular location is the golgi apparatus membrane. The protein resides in the early endosome membrane. It localises to the cytoplasmic vesicle membrane. It is found in the cleavage furrow. The protein localises to the cell projection. Its subcellular location is the neuron projection. The enzyme catalyses GTP + H2O = GDP + phosphate + H(+). Its activity is regulated as follows. Regulated by guanine nucleotide exchange factors (GEFs) including ANKRD27 and RABGEF1, which promote the exchange of bound GDP for free GTP. Regulated by GTPase activating proteins (GAPs) which increase the GTP hydrolysis activity. Inhibited by GDP dissociation inhibitors (GDIs). The small GTPases Rab are key regulators of intracellular membrane trafficking, from the formation of transport vesicles to their fusion with membranes. Rabs cycle between an inactive GDP-bound form and an active GTP-bound form that is able to recruit to membranes different sets of downstream effectors directly responsible for vesicle formation, movement, tethering and fusion. RAB21 is involved in membrane trafficking control. During the mitosis of adherent cells, controls the endosomal trafficking of integrins which is required for the successful completion of cytokinesis. Regulates integrin internalization and recycling, but does not influence the traffic of endosomally translocated receptors in general. As a result, may regulate cell adhesion and migration. Involved in neurite growth. Following SBF2/MTMT13-mediated activation in response to starvation-induced autophagy, binds to and regulates SNARE protein VAMP8 endolysosomal transport required for SNARE-mediated autophagosome-lysosome fusion. Modulates protein levels of the cargo receptors TMED2 and TMED10, and required for appropriate Golgi localization of TMED10. The chain is Ras-related protein Rab-21 from Homo sapiens (Human).